A 965-amino-acid chain; its full sequence is Translation initiation factor IF-2 (965 aa).

The segment at 94–375 is disordered; sequence RTFVRRDEAA…RGKHQESTTF (282 aa). Residues 104-115 show a composition bias toward low complexity; the sequence is EQAAEATGNGQE. Basic and acidic residues predominate over residues 121–177; sequence ELQRREEEARHEAELLEKQAQELKARQEQLAREEAERQAREQAAEAERRRAEEEAAK. Residues 181-191 show a composition bias toward low complexity; it reads AAVAEAAAAAR. The span at 192–253 shows a compositional bias: basic and acidic residues; that stretch reads EQAEQERASQ…KAEAEARAIR (62 aa). Residues 267–276 show a composition bias toward pro residues; the sequence is PEPPPKPAEA. Over residues 303-320 the composition is skewed to low complexity; that stretch reads KKPAPAAAAQPAATTQPA. Positions 351–364 are enriched in gly residues; the sequence is TSGGVDRGWRGGPK. A tr-type G domain is found at 465 to 634; that stretch reads PRPPVVTVMG…LLQAEVLELK (170 aa). The segment at 474-481 is G1; sequence GHVDHGKT. 474–481 lines the GTP pocket; that stretch reads GHVDHGKT. Positions 499–503 are G2; that stretch reads GITQH. The interval 520 to 523 is G3; it reads DTPG. GTP-binding positions include 520-524 and 574-577; these read DTPGH and NKID. The tract at residues 574 to 577 is G4; that stretch reads NKID. The tract at residues 610–612 is G5; the sequence is SAK.

This sequence belongs to the TRAFAC class translation factor GTPase superfamily. Classic translation factor GTPase family. IF-2 subfamily.

The protein localises to the cytoplasm. One of the essential components for the initiation of protein synthesis. Protects formylmethionyl-tRNA from spontaneous hydrolysis and promotes its binding to the 30S ribosomal subunits. Also involved in the hydrolysis of GTP during the formation of the 70S ribosomal complex. This Paraburkholderia phymatum (strain DSM 17167 / CIP 108236 / LMG 21445 / STM815) (Burkholderia phymatum) protein is Translation initiation factor IF-2.